A 230-amino-acid chain; its full sequence is Phosphoribosylaminoimidazole-succinocarboxamide synthase (230 aa).

This sequence belongs to the SAICAR synthetase family.

The catalysed reaction is 5-amino-1-(5-phospho-D-ribosyl)imidazole-4-carboxylate + L-aspartate + ATP = (2S)-2-[5-amino-1-(5-phospho-beta-D-ribosyl)imidazole-4-carboxamido]succinate + ADP + phosphate + 2 H(+). It functions in the pathway purine metabolism; IMP biosynthesis via de novo pathway; 5-amino-1-(5-phospho-D-ribosyl)imidazole-4-carboxamide from 5-amino-1-(5-phospho-D-ribosyl)imidazole-4-carboxylate: step 1/2. The sequence is that of Phosphoribosylaminoimidazole-succinocarboxamide synthase from Thermotoga petrophila (strain ATCC BAA-488 / DSM 13995 / JCM 10881 / RKU-1).